Here is a 417-residue protein sequence, read N- to C-terminus: Gamma-glutamyl phosphate reductase (417 aa).

It belongs to the gamma-glutamyl phosphate reductase family.

It is found in the cytoplasm. It catalyses the reaction L-glutamate 5-semialdehyde + phosphate + NADP(+) = L-glutamyl 5-phosphate + NADPH + H(+). It participates in amino-acid biosynthesis; L-proline biosynthesis; L-glutamate 5-semialdehyde from L-glutamate: step 2/2. Catalyzes the NADPH-dependent reduction of L-glutamate 5-phosphate into L-glutamate 5-semialdehyde and phosphate. The product spontaneously undergoes cyclization to form 1-pyrroline-5-carboxylate. This Legionella pneumophila (strain Corby) protein is Gamma-glutamyl phosphate reductase.